Reading from the N-terminus, the 71-residue chain is Cold shock-like protein CspB (71 aa).

The CSD domain occupies 7–67; sequence GLVKWFNADK…GAKGPAAANV (61 aa).

It localises to the cytoplasm. The sequence is that of Cold shock-like protein CspB (cspB) from Escherichia coli (strain K12).